Here is a 130-residue protein sequence, read N- to C-terminus: Small ribosomal subunit protein uS9 (130 aa).

Belongs to the universal ribosomal protein uS9 family.

The polypeptide is Small ribosomal subunit protein uS9 (Desulfovibrio desulfuricans (strain ATCC 27774 / DSM 6949 / MB)).